We begin with the raw amino-acid sequence, 219 residues long: Leukocyte surface antigen CD53 (219 aa).

Topologically, residues 2-11 are cytoplasmic; it reads GMSSLKLLKY. The helical transmembrane segment at 12–32 threads the bilayer; that stretch reads VLFFFNFLFWVCGCCILGFGI. Over 33–54 the chain is Extracellular; it reads HLLVQNTYGILFRNLPFLTLGN. Residues 55-69 traverse the membrane as a helical segment; sequence VLVIVGSIIMVVAFL. Over 70 to 80 the chain is Cytoplasmic; it reads GCMGSIKENKC. Residues 81–106 form a helical membrane-spanning segment; the sequence is LLMSFFVLLLLILLAEVTLAILLFVY. The Extracellular portion of the chain corresponds to 107–181; the sequence is EKKINTLVAE…KKGQAWFHSN (75 aa). Residues Asn119, Asn129, and Asn148 are each glycosylated (N-linked (GlcNAc...) asparagine). A helical membrane pass occupies residues 182–206; that stretch reads FLYIGIVTICVCVIQVLGMSFALTL. At 207 to 219 the chain is on the cytoplasmic side; it reads NCQIDKTSQALGL.

Belongs to the tetraspanin (TM4SF) family. Interacts with SCIMP. Interacts with CD45/PTPRC. Interacts with IL7R. Interacts with RBL2 and PPP2CA. As to expression, spleen and thymus, B-cells, monocytes, macrophages, neutrophils, single (CD4 or CD8) positive thymocytes, peripheral T-cells.

It is found in the cell membrane. Its subcellular location is the cell junction. The protein localises to the membrane. In terms of biological role, required for efficient formation of myofibers in regenerating muscle at the level of cell fusion. May be involved in growth regulation in hematopoietic cells. The polypeptide is Leukocyte surface antigen CD53 (Cd53) (Rattus norvegicus (Rat)).